Reading from the N-terminus, the 304-residue chain is UDP-3-O-acyl-N-acetylglucosamine deacetylase (304 aa).

Zn(2+) contacts are provided by His78, His237, and Asp241. The active-site Proton donor is the His264.

The protein belongs to the LpxC family. Requires Zn(2+) as cofactor.

It catalyses the reaction a UDP-3-O-[(3R)-3-hydroxyacyl]-N-acetyl-alpha-D-glucosamine + H2O = a UDP-3-O-[(3R)-3-hydroxyacyl]-alpha-D-glucosamine + acetate. Its pathway is glycolipid biosynthesis; lipid IV(A) biosynthesis; lipid IV(A) from (3R)-3-hydroxytetradecanoyl-[acyl-carrier-protein] and UDP-N-acetyl-alpha-D-glucosamine: step 2/6. Functionally, catalyzes the hydrolysis of UDP-3-O-myristoyl-N-acetylglucosamine to form UDP-3-O-myristoylglucosamine and acetate, the committed step in lipid A biosynthesis. This is UDP-3-O-acyl-N-acetylglucosamine deacetylase from Legionella pneumophila (strain Lens).